The following is a 605-amino-acid chain: Glutamine--fructose-6-phosphate aminotransferase [isomerizing] (605 aa).

Residue Cys2 is the Nucleophile; for GATase activity of the active site. The region spanning 2–220 is the Glutamine amidotransferase type-2 domain; the sequence is CGIVGVTGKD…DGEIVVVKPD (219 aa). SIS domains follow at residues 286–426 and 458–595; these read LLTA…VDQP and AKSA…VDKP. Residue Lys600 is the For Fru-6P isomerization activity of the active site.

In terms of assembly, homodimer.

Its subcellular location is the cytoplasm. It carries out the reaction D-fructose 6-phosphate + L-glutamine = D-glucosamine 6-phosphate + L-glutamate. Its function is as follows. Catalyzes the first step in hexosamine metabolism, converting fructose-6P into glucosamine-6P using glutamine as a nitrogen source. The sequence is that of Glutamine--fructose-6-phosphate aminotransferase [isomerizing] from Lactiplantibacillus plantarum (strain ATCC BAA-793 / NCIMB 8826 / WCFS1) (Lactobacillus plantarum).